A 243-amino-acid chain; its full sequence is Carboxy-S-adenosyl-L-methionine synthase (243 aa).

S-adenosyl-L-methionine contacts are provided by residues Tyr35, 68 to 70 (GCS), 92 to 93 (DN), and Arg199.

Belongs to the class I-like SAM-binding methyltransferase superfamily. Cx-SAM synthase family. Homodimer.

It catalyses the reaction prephenate + S-adenosyl-L-methionine = carboxy-S-adenosyl-L-methionine + 3-phenylpyruvate + H2O. Catalyzes the conversion of S-adenosyl-L-methionine (SAM) to carboxy-S-adenosyl-L-methionine (Cx-SAM). This Helicobacter pylori (strain P12) protein is Carboxy-S-adenosyl-L-methionine synthase.